Here is a 275-residue protein sequence, read N- to C-terminus: Tryptophan synthase alpha chain (275 aa).

Catalysis depends on proton acceptor residues glutamate 49 and aspartate 60.

Belongs to the TrpA family. As to quaternary structure, tetramer of two alpha and two beta chains.

It catalyses the reaction (1S,2R)-1-C-(indol-3-yl)glycerol 3-phosphate + L-serine = D-glyceraldehyde 3-phosphate + L-tryptophan + H2O. The protein operates within amino-acid biosynthesis; L-tryptophan biosynthesis; L-tryptophan from chorismate: step 5/5. Its function is as follows. The alpha subunit is responsible for the aldol cleavage of indoleglycerol phosphate to indole and glyceraldehyde 3-phosphate. The chain is Tryptophan synthase alpha chain from Psychrobacter sp. (strain PRwf-1).